Consider the following 173-residue polypeptide: Ribonuclease H (173 aa).

Residues Met1–Pro20 are disordered. An RNase H type-1 domain is found at Pro20–Gly162. Mg(2+)-binding residues include Asp29, Glu67, Asp89, and Asp154.

This sequence belongs to the RNase H family. As to quaternary structure, monomer. Mg(2+) is required as a cofactor.

The protein resides in the cytoplasm. The enzyme catalyses Endonucleolytic cleavage to 5'-phosphomonoester.. Functionally, endonuclease that specifically degrades the RNA of RNA-DNA hybrids. The sequence is that of Ribonuclease H from Syntrophus aciditrophicus (strain SB).